We begin with the raw amino-acid sequence, 273 residues long: Epithelial sodium channel subunit beta (273 aa).

At 1–245 (NCYIFNWGQE…RSISESPTTN (245 aa)) the chain is on the extracellular side. 5 cysteine pairs are disulfide-bonded: Cys-92–Cys-179, Cys-117–Cys-175, Cys-121–Cys-171, Cys-130–Cys-157, and Cys-132–Cys-146. Residues 246–273 (VVWLLSNLGGQFGFWMGGSVLCIIEFGE) form a helical membrane-spanning segment.

This sequence belongs to the amiloride-sensitive sodium channel (TC 1.A.6) family. SCNN1B subfamily. As to quaternary structure, component of the heterotrimeric epithelial sodium channel (ENaC) composed of an alpha/SCNN1A, a beta/SCNN1B and a gamma/SCNN1G subunit.

It localises to the apical cell membrane. It is found in the cytoplasmic vesicle membrane. It catalyses the reaction Na(+)(in) = Na(+)(out). Originally identified and characterized by its inhibition by the diuretic drug amiloride. Functionally, this is one of the three pore-forming subunits of the heterotrimeric epithelial sodium channel (ENaC), a critical regulator of sodium balance and fluid homeostasis. ENaC operates in epithelial tissues, where it mediates the electrodiffusion of sodium ions from extracellular fluid through the apical membrane of cells, with water following osmotically. It plays a key role in maintaining sodium homeostasis through electrogenic sodium reabsorption in the kidneys. Additionally, ENaC is essential for airway surface liquid homeostasis, which is crucial for proper mucus clearance. The sequence is that of Epithelial sodium channel subunit beta from Aquarana catesbeiana (American bullfrog).